The sequence spans 436 residues: 3-ketoacyl-CoA thiolase (436 aa).

Cys-99 functions as the Acyl-thioester intermediate in the catalytic mechanism. Catalysis depends on proton acceptor residues His-392 and Cys-422.

This sequence belongs to the thiolase-like superfamily. Thiolase family. Heterotetramer of two alpha chains (FadJ) and two beta chains (FadI).

Its subcellular location is the cytoplasm. It carries out the reaction an acyl-CoA + acetyl-CoA = a 3-oxoacyl-CoA + CoA. It functions in the pathway lipid metabolism; fatty acid beta-oxidation. In terms of biological role, catalyzes the final step of fatty acid oxidation in which acetyl-CoA is released and the CoA ester of a fatty acid two carbons shorter is formed. The protein is 3-ketoacyl-CoA thiolase of Shigella flexneri serotype 5b (strain 8401).